A 572-amino-acid chain; its full sequence is Thiamine biosynthesis protein THI22 (572 aa).

The N-terminal stretch at 1–19 is a signal peptide; the sequence is MVIILLGLCTLGFPRTAFC.

Belongs to the thiaminase-2 family.

The protein resides in the secreted. In terms of biological role, is not required for thiamine biosynthesis. In Saccharomyces cerevisiae (strain ATCC 204508 / S288c) (Baker's yeast), this protein is Thiamine biosynthesis protein THI22 (THI22).